An 87-amino-acid chain; its full sequence is Small ribosomal subunit protein bS16 (87 aa).

This sequence belongs to the bacterial ribosomal protein bS16 family.

The sequence is that of Small ribosomal subunit protein bS16 from Buchnera aphidicola subsp. Baizongia pistaciae (strain Bp).